A 461-amino-acid polypeptide reads, in one-letter code: Cysteine--tRNA ligase (461 aa).

C29 is a binding site for Zn(2+). Residues 31-41 carry the 'HIGH' region motif; the sequence is MTVYDFCHIGH. The Zn(2+) site is built by C210, H235, and E239. The 'KMSKS' region signature appears at 267–271; the sequence is KMSKS. K270 is an ATP binding site.

It belongs to the class-I aminoacyl-tRNA synthetase family. In terms of assembly, monomer. The cofactor is Zn(2+).

It is found in the cytoplasm. It carries out the reaction tRNA(Cys) + L-cysteine + ATP = L-cysteinyl-tRNA(Cys) + AMP + diphosphate. This chain is Cysteine--tRNA ligase, found in Ectopseudomonas mendocina (strain ymp) (Pseudomonas mendocina).